Consider the following 179-residue polypeptide: Large ribosomal subunit protein uL5 (179 aa).

The protein belongs to the universal ribosomal protein uL5 family. Part of the 50S ribosomal subunit; part of the 5S rRNA/L5/L18/L25 subcomplex. Contacts the 5S rRNA and the P site tRNA. Forms a bridge to the 30S subunit in the 70S ribosome.

Its function is as follows. This is one of the proteins that bind and probably mediate the attachment of the 5S RNA into the large ribosomal subunit, where it forms part of the central protuberance. In the 70S ribosome it contacts protein S13 of the 30S subunit (bridge B1b), connecting the 2 subunits; this bridge is implicated in subunit movement. Contacts the P site tRNA; the 5S rRNA and some of its associated proteins might help stabilize positioning of ribosome-bound tRNAs. This Photobacterium profundum (strain SS9) protein is Large ribosomal subunit protein uL5.